Consider the following 430-residue polypeptide: Enolase (430 aa).

Glutamine 163 provides a ligand contact to (2R)-2-phosphoglycerate. Glutamate 205 (proton donor) is an active-site residue. Residues aspartate 242, glutamate 287, and aspartate 314 each contribute to the Mg(2+) site. (2R)-2-phosphoglycerate-binding residues include lysine 339, arginine 368, serine 369, and lysine 390. Catalysis depends on lysine 339, which acts as the Proton acceptor.

The protein belongs to the enolase family. Mg(2+) is required as a cofactor.

It is found in the cytoplasm. The protein localises to the secreted. The protein resides in the cell surface. It catalyses the reaction (2R)-2-phosphoglycerate = phosphoenolpyruvate + H2O. It participates in carbohydrate degradation; glycolysis; pyruvate from D-glyceraldehyde 3-phosphate: step 4/5. In terms of biological role, catalyzes the reversible conversion of 2-phosphoglycerate (2-PG) into phosphoenolpyruvate (PEP). It is essential for the degradation of carbohydrates via glycolysis. This Geobacillus kaustophilus (strain HTA426) protein is Enolase.